Here is a 264-residue protein sequence, read N- to C-terminus: Proliferating cell nuclear antigen 2 (264 aa).

This sequence belongs to the PCNA family. As to quaternary structure, homotrimer. Oligomer. Interacts with ORC1 (via PIP-box motif). Interacts with FEN1.

The protein localises to the nucleus. It is found in the chromosome. Its subcellular location is the cytoplasm. May be involved in DNA damage response. Appears not to be involved in DNA replication in trophozoites. This is Proliferating cell nuclear antigen 2 from Plasmodium falciparum (isolate 3D7).